Here is a 156-residue protein sequence, read N- to C-terminus: Small ribosomal subunit protein uS7 (156 aa).

It belongs to the universal ribosomal protein uS7 family. Part of the 30S ribosomal subunit. Contacts proteins S9 and S11.

One of the primary rRNA binding proteins, it binds directly to 16S rRNA where it nucleates assembly of the head domain of the 30S subunit. Is located at the subunit interface close to the decoding center, probably blocks exit of the E-site tRNA. The sequence is that of Small ribosomal subunit protein uS7 from Thiobacillus denitrificans (strain ATCC 25259 / T1).